An 85-amino-acid chain; its full sequence is MKQYIFFLALIVLTATFAEAGKKTEILDKVKKVFSKGIAGVADLNNMSELGCPFIEKWCEDHCESKKQVGKCENFDCSCVKLGGK.

The first 20 residues, 1–20 (MKQYIFFLALIVLTATFAEA), serve as a signal peptide directing secretion. A propeptide spanning residues 21 to 37 (GKKTEILDKVKKVFSKG) is cleaved from the precursor. In terms of domain architecture, BetaSPN-type CS-alpha/beta spans 49 to 85 (ELGCPFIEKWCEDHCESKKQVGKCENFDCSCVKLGGK). Disulfide bonds link cysteine 52–cysteine 72, cysteine 59–cysteine 77, and cysteine 63–cysteine 79.

This sequence belongs to the long chain scorpion toxin family. Class 2 subfamily. As to expression, expressed by the venom gland.

It localises to the secreted. Functionally, toxin with activity on voltage-gated potassium channels. Moderately and reversibly blocks up to 50% of the activity of Kv7.1/KCNQ1 (tested at 22 uM). 3D-structure modeling of the KCNQ1-toxin complex shows that the toxin interacts with the channel pore domain. Additionally, shows a very weak effect to block voltage-gated potassium channel Kv1.1/KCNA1. Has a very weak effect to block voltage-gated potassium channel Kv1.1/KCNA1. The polypeptide is Neurotoxin beta-KTx 14.3 (Lychas mucronatus (Chinese swimming scorpion)).